A 368-amino-acid chain; its full sequence is DNA-dependent metalloprotease dvc-1 (368 aa).

A SprT-like domain is found at 21 to 190; it reads HALFIQFDAR…QSCGGNFLKV (170 aa). His89 is a Zn(2+) binding site. Glu90 is an active-site residue. Zn(2+)-binding residues include His93 and His108. The tract at residues 187 to 309 is disordered; sequence FLKVKEPEGY…PVNFTSPSSA (123 aa). Positions 226–237 are enriched in basic and acidic residues; it reads TLDDFFKKDGKN. Over residues 238–274 the composition is skewed to low complexity; that stretch reads SSDNSTSKSPTKPSTSLFTGSGQKLGGSSSTSSLLNS. The UBZ4-type zinc finger occupies 344–368; that stretch reads SVICPSCNTEVMENLIHGHLDYCLG. Positions 347, 350, 362, and 366 each coordinate Zn(2+).

This sequence belongs to the Spartan family. Interacts with vcp/p97 (cdc-48.1 or cdc-48.2).

Its subcellular location is the nucleus. It localises to the chromosome. DNA-dependent metalloendopeptidase that mediates the proteolytic cleavage of covalent DNA-protein cross-links (DPCs) during DNA synthesis, thereby playing a key role in maintaining genomic integrity. DPCs are highly toxic DNA lesions that interfere with essential chromatin transactions, such as replication and transcription, and which are induced by reactive agents, such as UV light or formaldehyde. Associates with the DNA replication machinery and specifically removes DPCs during DNA synthesis. Regulator of UV-induced DNA damage response: required to protect genome stability during DNA replication, possibly via recruitment of vcp/p97 (cdc-48.1 or cdc-48.2) recruitment. In Caenorhabditis elegans, this protein is DNA-dependent metalloprotease dvc-1.